Reading from the N-terminus, the 1925-residue chain is Cilia- and flagella-associated protein 65 (1925 aa).

The helical transmembrane segment at 188 to 208 threads the bilayer; it reads FFTVIPQPIFLSPGITLTLPI. The 110-residue stretch at 877 to 986 folds into the MSP domain; the sequence is QLKLDTHKSL…THYMLRLVGV (110 aa). The stretch at 1525–1550 forms a coiled coil; it reads SQQLMRQYHKELQEWKDEKVRQEVEF. 2 disordered regions span residues 1645–1667 and 1736–1823; these read KRKA…WGPV and SSWE…PESQ. Composition is skewed to basic and acidic residues over residues 1649–1661 and 1739–1762; these read PREE…EKSP and EDGK…KKEE. Residues 1763 to 1804 are compositionally biased toward acidic residues; that stretch reads GEEEKGEEEEEELEEEEEEEEETEEEELGKEEIEEKEEERDE.

The protein belongs to the CFAP65 family. In terms of assembly, interacts with CFAP47.

It is found in the cell projection. It localises to the cilium. The protein resides in the flagellum membrane. The protein localises to the cytoplasmic vesicle. Its subcellular location is the secretory vesicle. It is found in the acrosome membrane. It localises to the cytoplasm. Plays a role in flagellar formation and sperm motility. The sequence is that of Cilia- and flagella-associated protein 65 from Homo sapiens (Human).